Consider the following 460-residue polypeptide: Keratin, type I cytoskeletal 27 (460 aa).

Positions 1 to 83 are head; sequence MSVRFSSASR…GNEHGLLSGN (83 aa). Residues 84 to 119 are coil 1A; it reads EKVTMQNLNDRLASYLDNVRALEEANADLEQKIKGW. One can recognise an IF rod domain in the interval 84 to 399; that stretch reads EKVTMQNLND…RLIDGEDGSC (316 aa). The linker 1 stretch occupies residues 120-141; that stretch reads YEKFGPGSCRGLDHDYSRYFTV. Residues 142-233 form a coil 1B region; sequence IDDLRNQIIS…KNHEEEMKAL (92 aa). The segment at 234–256 is linker 12; it reads QCAAGGNVNVEMNAAPGVDLTVL. The tract at residues 257–395 is coil 2; that stretch reads LNNMRAEYEA…ETYCRLIDGE (139 aa). Residues 396-460 form a tail region; sequence DGSCTKSKGY…NMKSEQRVPS (65 aa). The disordered stretch occupies residues 429–460; the sequence is DPRGKVPSSRVHTVEEKSTKVNNMKSEQRVPS. The segment covering 448–460 has biased composition (polar residues); the sequence is KVNNMKSEQRVPS.

The protein belongs to the intermediate filament family. Heterotetramer of two type I and two type II keratins. Interacts with KRT6A to form filaments.

Its subcellular location is the cytoplasm. Its function is as follows. Essential for the proper assembly of type I and type II keratin protein complexes and formation of keratin intermediate filaments in the inner root sheath (irs). The protein is Keratin, type I cytoskeletal 27 of Capra hircus (Goat).